A 98-amino-acid chain; its full sequence is DNA-binding protein Fis (98 aa).

Positions 74–93 (QTKAANMMGINRGTLRKKLK) form a DNA-binding region, H-T-H motif.

Belongs to the transcriptional regulatory Fis family. Homodimer.

Activates ribosomal RNA transcription. Plays a direct role in upstream activation of rRNA promoters. The sequence is that of DNA-binding protein Fis from Aliivibrio fischeri (strain ATCC 700601 / ES114) (Vibrio fischeri).